A 140-amino-acid polypeptide reads, in one-letter code: MDNKMRLEFLAKSENEGFARVSVSAFIAQLDPTIEELTDIKTAVSEAVTNAIIHGYECDESKVVIIEASICEDEISITVEDNGIGIENLEEAREPLYTSKPELERSGMGFTVMETFMDSLEVYSEKNKGTKIIMKKKMNT.

The protein belongs to the anti-sigma-factor family.

It carries out the reaction L-seryl-[protein] + ATP = O-phospho-L-seryl-[protein] + ADP + H(+). It catalyses the reaction L-threonyl-[protein] + ATP = O-phospho-L-threonyl-[protein] + ADP + H(+). Functionally, binds to sigma F and blocks its ability to form an RNA polymerase holoenzyme (E-sigma F). Phosphorylates SpoIIAA on a serine residue. This phosphorylation may enable SpoIIAA to act as an anti-anti-sigma factor that counteracts SpoIIAB and thus releases sigma F from inhibition. The polypeptide is Anti-sigma F factor (Clostridium perfringens (strain SM101 / Type A)).